Reading from the N-terminus, the 48-residue chain is Protein TUNAR (48 aa).

Positions 1–20 (MVITSENDEDRGGQEKESKE) are disordered. Positions 10–20 (DRGGQEKESKE) are enriched in basic and acidic residues. A helical transmembrane segment spans residues 24–44 (LAMLGIIGTILNLIVIIFVYI).

In terms of assembly, interacts with ATPase ATP2A2/SERCA2. Interacts with ATPase ATP2A3/SERCA3; the interaction occurs at low levels in low glucose conditions and is increased by high glucose levels. Highly expressed in pancreatic islets where it is enriched in the insulin-producing beta cells.

It is found in the endoplasmic reticulum membrane. It localises to the extracellular vesicle membrane. In terms of biological role, in neurons, plays a role in the regulation of intracellular Ca(2+), possibly by acting as an activator of ATP2A2/SERCA2, thus increasing the efficiency with which Ca(2+) is removed from the cytoplasm. Inhibits differentiation of embryonic stem cells into neurons and inhibits neurite outgrowth, likely as a result of its role in intracellular Ca(2+) regulation. In pancreatic beta cells, lowers Ca(2+) levels in the endoplasmic reticulum and enhances glucose-stimulated insulin secretion. The protein is Protein TUNAR of Homo sapiens (Human).